We begin with the raw amino-acid sequence, 151 residues long: Phosphopantetheine adenylyltransferase (151 aa).

Serine 9 contributes to the substrate binding site. Residues 9–10 (SF) and histidine 17 contribute to the ATP site. 3 residues coordinate substrate: lysine 41, threonine 73, and arginine 87. Residues 88 to 90 (GLR), glutamate 98, and 122 to 128 (KAHISST) contribute to the ATP site.

This sequence belongs to the bacterial CoaD family. As to quaternary structure, homohexamer. It depends on Mg(2+) as a cofactor.

It is found in the cytoplasm. It carries out the reaction (R)-4'-phosphopantetheine + ATP + H(+) = 3'-dephospho-CoA + diphosphate. It functions in the pathway cofactor biosynthesis; coenzyme A biosynthesis; CoA from (R)-pantothenate: step 4/5. In terms of biological role, reversibly transfers an adenylyl group from ATP to 4'-phosphopantetheine, yielding dephospho-CoA (dPCoA) and pyrophosphate. The sequence is that of Phosphopantetheine adenylyltransferase from Christiangramia forsetii (strain DSM 17595 / CGMCC 1.15422 / KT0803) (Gramella forsetii).